Reading from the N-terminus, the 159-residue chain is Neuroglobin (159 aa).

The 149-residue stretch at 3–151 (KLSEKDKELI…VVAAMSQGWA (149 aa)) folds into the Globin domain. Histidine 66 and histidine 98 together coordinate heme b.

It belongs to the globin family. Monomer. Homodimers and homotetramers. Mainly monomeric but also detected as part of homodimers and homotetramers.

It localises to the cytoplasm. The protein localises to the cytosol. The protein resides in the mitochondrion matrix. The catalysed reaction is Fe(III)-heme b-[protein] + nitric oxide + H2O = Fe(II)-heme b-[protein] + nitrite + 2 H(+). Functionally, monomeric globin with a bis-histidyl six-coordinate heme-iron atom through which it can bind dioxygen, carbon monoxide and nitric oxide. Could help transport oxygen and increase its availability to the metabolically active neuronal tissues, though its low quantity in tissues as well as its high affinity for dioxygen, which may limit its oxygen-releasing ability, argue against it. The ferrous/deoxygenated form exhibits a nitrite reductase activity and it could produce nitric oxide which in turn inhibits cellular respiration in response to hypoxia. In its ferrous/deoxygenated state, it may also exhibit GDI (Guanine nucleotide Dissociation Inhibitor) activity toward heterotrimeric G-alpha proteins, thereby regulating signal transduction to facilitate neuroprotective responses in the wake of hypoxia and associated oxidative stress. This Chaenocephalus aceratus (Blackfin icefish) protein is Neuroglobin (ngb).